A 180-amino-acid chain; its full sequence is uncharacterized protein (180 aa).

This is an uncharacterized protein from Staphylococcus aureus.